The following is a 301-amino-acid chain: 5'-adenylylsulfate reductase-like 5 (301 aa).

Positions 1-21 (MTRCAVVAAVAAVLLVAGAAA) are cleaved as a signal peptide. The Thioredoxin domain maps to 51–164 (CIRIEPSPPV…LVDFYKETTG (114 aa)). A glycan (N-linked (GlcNAc...) asparagine) is linked at Asn-139. The helical transmembrane segment at 201–221 (FVLLAVLFIILKVAAHFVPIV) threads the bilayer. A glycan (N-linked (GlcNAc...) asparagine) is linked at Asn-268.

The protein localises to the membrane. In Oryza sativa subsp. japonica (Rice), this protein is 5'-adenylylsulfate reductase-like 5 (APRL5).